A 125-amino-acid polypeptide reads, in one-letter code: Small ribosomal subunit protein uS12m (125 aa).

Residues 1–26 (MPTINQLLRKKSSRQAPKLKSKKPAL) are disordered. The segment covering 8–23 (LRKKSSRQAPKLKSKK) has biased composition (basic residues).

The protein belongs to the universal ribosomal protein uS12 family.

Its subcellular location is the mitochondrion. This Prototheca wickerhamii protein is Small ribosomal subunit protein uS12m (RPS12).